Consider the following 456-residue polypeptide: Probable tRNA(Ile)-lysidine synthase (456 aa).

An ATP-binding site is contributed by 30 to 35; the sequence is SGGVDS.

This sequence belongs to the tRNA(Ile)-lysidine synthase family.

Its subcellular location is the cytoplasm. The enzyme catalyses cytidine(34) in tRNA(Ile2) + L-lysine + ATP = lysidine(34) in tRNA(Ile2) + AMP + diphosphate + H(+). In terms of biological role, ligates lysine onto the cytidine present at position 34 of the AUA codon-specific tRNA(Ile) that contains the anticodon CAU, in an ATP-dependent manner. Cytidine is converted to lysidine, thus changing the amino acid specificity of the tRNA from methionine to isoleucine. This Schizosaccharomyces pombe (strain 972 / ATCC 24843) (Fission yeast) protein is Probable tRNA(Ile)-lysidine synthase.